Consider the following 642-residue polypeptide: Bifunctional protein glk (642 aa).

The interval 1–340 (MSTGAQSKAV…QLSNRSGGAS (340 aa)) is glucokinase. 23–28 (ADVGGT) lines the ATP pocket. Positions 341-417 (SAVFERIRQM…LKLATGLTGT (77 aa)) constitute an HTH rpiR-type domain. Residues 341–642 (SAVFERIRQM…SPAAKDVARD (302 aa)) are putative HTH-type transcriptional regulator. The H-T-H motif DNA-binding region spans 377-396 (IVDIARKADVSQPTVIRFCR). In terms of domain architecture, SIS spans 461-600 (AIEILNGARR…AVGVAIRRAS (140 aa)). Residues 576-596 (SMISRILHLLMIDILAVGVAI) form a helical membrane-spanning segment.

The protein in the N-terminal section; belongs to the bacterial glucokinase family.

It localises to the membrane. The catalysed reaction is D-glucose + ATP = D-glucose 6-phosphate + ADP + H(+). The sequence is that of Bifunctional protein glk (glk) from Burkholderia orbicola (strain AU 1054).